Here is a 1050-residue protein sequence, read N- to C-terminus: Beta-galactosidase (1050 aa).

Substrate is bound by residues N100 and D199. A Na(+)-binding site is contributed by D199. Mg(2+) is bound by residues E422, H424, and E467. Substrate contacts are provided by residues E467 and 543 to 546; that span reads EYAH. The Proton donor role is filled by E467. E543 (nucleophile) is an active-site residue. Mg(2+) is bound at residue N603. Residues F607 and N610 each contribute to the Na(+) site. Substrate contacts are provided by N610 and W1025.

This sequence belongs to the glycosyl hydrolase 2 family. As to quaternary structure, homotetramer. The cofactor is Mg(2+). It depends on Na(+) as a cofactor.

It catalyses the reaction Hydrolysis of terminal non-reducing beta-D-galactose residues in beta-D-galactosides.. The sequence is that of Beta-galactosidase from Yersinia pestis bv. Antiqua (strain Angola).